The primary structure comprises 466 residues: 3-isopropylmalate dehydratase large subunit (466 aa).

Residues cysteine 347, cysteine 407, and cysteine 410 each coordinate [4Fe-4S] cluster.

Belongs to the aconitase/IPM isomerase family. LeuC type 1 subfamily. Heterodimer of LeuC and LeuD. It depends on [4Fe-4S] cluster as a cofactor.

It carries out the reaction (2R,3S)-3-isopropylmalate = (2S)-2-isopropylmalate. The protein operates within amino-acid biosynthesis; L-leucine biosynthesis; L-leucine from 3-methyl-2-oxobutanoate: step 2/4. Functionally, catalyzes the isomerization between 2-isopropylmalate and 3-isopropylmalate, via the formation of 2-isopropylmaleate. The sequence is that of 3-isopropylmalate dehydratase large subunit from Shewanella pealeana (strain ATCC 700345 / ANG-SQ1).